We begin with the raw amino-acid sequence, 325 residues long: Ribosomal RNA small subunit methyltransferase H (325 aa).

Residues 1-28 (MTASQPLDQADQDSESSSAGSSAAETEH) form a disordered region. Residues 15 to 24 (ESSSAGSSAA) show a composition bias toward low complexity. Residues 56-58 (GGH), D82, Y110, D131, and Q138 contribute to the S-adenosyl-L-methionine site. Residues 303–325 (TDEEVQANPRSRSAKLRVAKRVE) are disordered. Positions 314 to 325 (RSAKLRVAKRVE) are enriched in basic residues.

It belongs to the methyltransferase superfamily. RsmH family.

It is found in the cytoplasm. It carries out the reaction cytidine(1402) in 16S rRNA + S-adenosyl-L-methionine = N(4)-methylcytidine(1402) in 16S rRNA + S-adenosyl-L-homocysteine + H(+). Functionally, specifically methylates the N4 position of cytidine in position 1402 (C1402) of 16S rRNA. The protein is Ribosomal RNA small subunit methyltransferase H of Rhodopirellula baltica (strain DSM 10527 / NCIMB 13988 / SH1).